A 323-amino-acid chain; its full sequence is tRNA U34 carboxymethyltransferase (323 aa).

Carboxy-S-adenosyl-L-methionine-binding positions include Lys-91, Trp-105, Lys-110, Gly-130, 152–154 (DPT), 181–182 (IE), Met-196, Tyr-200, and Arg-315.

This sequence belongs to the class I-like SAM-binding methyltransferase superfamily. CmoB family. As to quaternary structure, homotetramer.

It catalyses the reaction carboxy-S-adenosyl-L-methionine + 5-hydroxyuridine(34) in tRNA = 5-carboxymethoxyuridine(34) in tRNA + S-adenosyl-L-homocysteine + H(+). Its function is as follows. Catalyzes carboxymethyl transfer from carboxy-S-adenosyl-L-methionine (Cx-SAM) to 5-hydroxyuridine (ho5U) to form 5-carboxymethoxyuridine (cmo5U) at position 34 in tRNAs. The protein is tRNA U34 carboxymethyltransferase of Shigella dysenteriae serotype 1 (strain Sd197).